Consider the following 71-residue polypeptide: Large ribosomal subunit protein bL31 (71 aa).

Zn(2+) is bound by residues Cys16, Cys18, Cys36, and Cys39.

It belongs to the bacterial ribosomal protein bL31 family. Type A subfamily. As to quaternary structure, part of the 50S ribosomal subunit. It depends on Zn(2+) as a cofactor.

Functionally, binds the 23S rRNA. The chain is Large ribosomal subunit protein bL31 from Syntrophus aciditrophicus (strain SB).